Consider the following 353-residue polypeptide: Peroxisome assembly protein 12-B (353 aa).

At 1-19 the chain is on the peroxisomal matrix side; it reads MAERGAHITTTSPLDDRPS. A helical transmembrane segment spans residues 20–47; that stretch reads IFEVVAQESLMAAARPALHHIVKVLAES. Residues 48–51 are Cytoplasmic-facing; that stretch reads NPAR. The helical transmembrane segment at 52–76 threads the bilayer; that stretch reads YGTLWRWFDELYTLLECLLQQHYLS. The Peroxisomal matrix portion of the chain corresponds to 77–104; that stretch reads WASASFSENFYGLKRVTLGKQVGQRNLA. The chain crosses the membrane as a helical span at residues 105 to 134; it reads RKEYWKSLLLLVLIPYLRIKLEKLVNSLRE. The Cytoplasmic portion of the chain corresponds to 135 to 139; the sequence is EEDYS. The chain crosses the membrane as a helical span at residues 140-178; the sequence is IQNPTSFHKRCYKAILASYPFLKLGWEAWFLFYQLRYIL. Residues 179–243 lie on the Peroxisomal matrix side of the membrane; it reads WNGKHHSPLL…LGAVTLSVSS (65 aa). A helical membrane pass occupies residues 244 to 271; it reads SLSLGVFFLQFLDWWYSAENRETLKSLG. Residues 272 to 353 are Cytoplasmic-facing; it reads NLPVPPPPIH…HLIKLYTPDG (82 aa). Residues cysteine 298, cysteine 301, cysteine 319, and cysteine 322 each contribute to the Zn(2+) site. The RING-type; degenerate zinc finger occupies 298-337; sequence CPLCRKVRVNDTALGTSGYVFCYRCAYYYVKTHQRCPVSG.

Belongs to the pex2/pex10/pex12 family. As to quaternary structure, component of the PEX2-PEX10-PEX12 retrotranslocation channel.

Its subcellular location is the peroxisome membrane. It functions in the pathway protein modification; protein ubiquitination. Functionally, component of a retrotranslocation channel required for peroxisome organization by mediating export of the PEX5 receptor from peroxisomes to the cytosol, thereby promoting PEX5 recycling. The retrotranslocation channel is composed of PEX2, PEX10 and PEX12; each subunit contributing transmembrane segments that coassemble into an open channel that specifically allows the passage of PEX5 through the peroxisomal membrane. PEX12 also regulates PEX5 recycling by activating the E3 ubiquitin-protein ligase activity of PEX10. When PEX5 recycling is compromised, PEX12 stimulates PEX10-mediated polyubiquitination of PEX5, leading to its subsequent degradation. This chain is Peroxisome assembly protein 12-B, found in Xenopus laevis (African clawed frog).